The following is a 443-amino-acid chain: Methyl-coenzyme M reductase subunit beta (443 aa).

Tyrosine 367 lines the coenzyme M pocket. Residue glycine 369 coordinates coenzyme B.

This sequence belongs to the methyl-coenzyme M reductase beta subunit family. As to quaternary structure, MCR is a hexamer of two alpha, two beta, and two gamma chains, forming a dimer of heterotrimers. Requires coenzyme F430 as cofactor.

The protein resides in the cytoplasm. The catalysed reaction is coenzyme B + methyl-coenzyme M = methane + coenzyme M-coenzyme B heterodisulfide. It participates in one-carbon metabolism; methyl-coenzyme M reduction; methane from methyl-coenzyme M: step 1/1. Component of the methyl-coenzyme M reductase (MCR) I that catalyzes the reductive cleavage of methyl-coenzyme M (CoM-S-CH3 or 2-(methylthio)ethanesulfonate) using coenzyme B (CoB or 7-mercaptoheptanoylthreonine phosphate) as reductant which results in the production of methane and the mixed heterodisulfide of CoB and CoM (CoM-S-S-CoB). This is the final step in methanogenesis. This chain is Methyl-coenzyme M reductase subunit beta (mcrB), found in Methanococcus voltae.